A 538-amino-acid chain; its full sequence is Sodium/hydrogen exchanger 1 (538 aa).

At 1–19 the chain is on the cytoplasmic side; that stretch reads MLDSLVSKLPSLSTSDHAS. The chain crosses the membrane as a helical span at residues 20–40; that stretch reads VVALNLFVALLCACIVLGHLL. Topologically, residues 41–45 are vacuolar; it reads EENRW. The chain crosses the membrane as a helical span at residues 46-66; that stretch reads MNESITALLIGLGTGVTILLI. At 67-73 the chain is on the cytoplasmic side; it reads SKGKSSH. An intramembrane region (helical) is located at residues 74–94; it reads LLVFSEDLFFIYLLPPIIFNA. Residues 95–106 lie on the Cytoplasmic side of the membrane; the sequence is GFQVKKKQFFRN. Residues 107–127 traverse the membrane as a helical segment; sequence FVTIMLFGAVGTIISCTIISL. Residues 128–146 are Vacuolar-facing; it reads GVTQFFKKLDIGTFDLGDY. 2 intramembrane regions (helical) span residues 147 to 166 and 172 to 192; these read LAIG…QVLN and LLYS…VVVF. Residues 193–216 are Vacuolar-facing; the sequence is NAIQSFDLTHLNHEAAFHLLGNFL. Residues 217 to 237 form a helical membrane-spanning segment; that stretch reads YLFLLSTLLGAATGLISAYVI. The Cytoplasmic portion of the chain corresponds to 238-262; that stretch reads KKLYFGRHSTDREVALMMLMAYLSY. Residues 263-283 traverse the membrane as a helical segment; it reads MLAELFDLSGILTVFFCGIVM. The Vacuolar portion of the chain corresponds to 284-302; the sequence is SHYTWHNVTESSRITTKHT. An N-linked (GlcNAc...) asparagine glycan is attached at asparagine 290. A helical transmembrane segment spans residues 303–323; sequence FATLSFLAETFIFLYVGMDAL. Over 324–342 the chain is Cytoplasmic; it reads DIDKWRSVSDTPGTSIAVS. The chain crosses the membrane as a helical span at residues 343 to 363; sequence SILMGLVMVGRAAFVFPLSFL. Topologically, residues 364-378 are vacuolar; the sequence is SNLAKKNQSEKINFN. A glycan (N-linked (GlcNAc...) asparagine) is linked at asparagine 370. Residues 379–399 traverse the membrane as a helical segment; it reads MQVVIWWSGLMRGAVSMALAY. The Cytoplasmic segment spans residues 400–413; the sequence is NKFTRAGHTDVRGN. A helical transmembrane segment spans residues 414 to 434; the sequence is AIMITSTITVCLFSTVVFGML. The Vacuolar portion of the chain corresponds to 435–538; sequence TKPLISYLLP…ERNPPDLSKA (104 aa). Residue asparagine 447 is glycosylated (N-linked (GlcNAc...) asparagine). The segment at 496–518 is interaction with CML18/CAM15; the sequence is RTVHYYWRQFDDSFMRPVFGGRG.

This sequence belongs to the monovalent cation:proton antiporter 1 (CPA1) transporter (TC 2.A.36) family. As to quaternary structure, calcium and pH-dependent interaction with CML18/CAM15 (increases when pH decreases, better at pH 5.5 than at pH 7.5). As to expression, ubiquitous, with higher levels around vascular tissues and guard cells.

The protein localises to the vacuole membrane. It is found in the endoplasmic reticulum membrane. Its subcellular location is the golgi apparatus membrane. It carries out the reaction Na(+)(in) + H(+)(out) = Na(+)(out) + H(+)(in). It catalyses the reaction K(+)(in) + H(+)(out) = K(+)(out) + H(+)(in). In terms of biological role, acts in low affinity electroneutral exchange of protons for cations such as Na(+) or K(+) across membranes. Can also exchange Li(+) and Cs(+) with a lower affinity. Involved in vacuolar ion compartmentalization necessary for cell volume regulation and cytoplasmic Na(+) detoxification. Required during leaves expansion, probably to stimulate epidermal cell expansion. Confers competence to grow in high salinity conditions. The sequence is that of Sodium/hydrogen exchanger 1 (NHX1) from Arabidopsis thaliana (Mouse-ear cress).